The primary structure comprises 397 residues: UDP-GlcNAc:betaGal beta-1,3-N-acetylglucosaminyltransferase 8 (397 aa).

At M1 to C6 the chain is on the cytoplasmic side. A helical; Signal-anchor for type II membrane protein transmembrane segment spans residues L7–I23. Residues E24 to C397 lie on the Lumenal side of the membrane. The tract at residues K33 to L58 is disordered. Pro residues predominate over residues R39–T53. N57 carries N-linked (GlcNAc...) asparagine glycosylation.

The protein belongs to the glycosyltransferase 31 family. In terms of assembly, interacts with B3GNT2; this interaction greatly increases B3GNT2 catalytic activity, independently of B3GNT8 enzymatic activity. As to expression, highly expressed in small intestine, pancreas, spleen, bone marrow, lung, throat, and ileum, and weakly in fetal brain, cerebellum, heart, liver, tongue, breast, uteri, and testis. Not detected in colon. Differentially expressed in human tumor cell lines.

It localises to the golgi apparatus membrane. It functions in the pathway protein modification; protein glycosylation. Beta-1,3-N-acetylglucosaminyltransferase that plays a role in the elongation of specific branch structures of multiantennary N-glycans. Has strong activity towards tetraantennary N-glycans and 2,6 triantennary glycans. In Homo sapiens (Human), this protein is UDP-GlcNAc:betaGal beta-1,3-N-acetylglucosaminyltransferase 8.